A 653-amino-acid polypeptide reads, in one-letter code: MGCCSSASAAQSSKREWKPLEDRSCTDIPWLLLFVLFCIGMGFICGFSVATGAAARLVSGYDSYGNICGQRNAKLEAIPNSGLDHTHRKYVFFLDPCNLDLINRKIKSIALCVAACPRQELKTLSDVQKFAEINGSALCSYNIKPSEYTLTSKSSGFCPKLPVPASAPIPFFHRCAPVNISCYAKFAEALITFVSDNSVLHRLISGVMTSKEIILGLCLLSLVLSMILMVIIRYISRVLVWILTVLVILGSLGGTGVLWWLYAKQRRSPKEAVIPEQLQIAEDNLRALLIYAISATVFTVILFLIMLVMRKRVALTIALFHVAGKVFIHLPLLVFQPFWTFFALVLFWAYWIMTLLFLGTTGSAVQNEQGFVEYKISGPLQYMWWYHVVGLIWISEFILACQQMTVAGAVVTYYFTRDKRNLPFTPILASVNRLIRYHLGTVAKGSFIITLVKIPRMVLMYIHSQLKGKENACARCMLKSCICCLWCLEKCLSYLNQNAYTATAINSTNFCTSAKDAFVILVENALRVAAINTVGDFMLFLGKVLIVCSTGLAGIMLLNYQQDYTVWVLPLIIVCLFAFLVAHCFLSIYEMVVDVLFLCFAIDTKYNDGSPGREFYMDKVLMEFVENSRKAMKEAGKGGAADARELKPMLRKR.

A lipid anchor (N-myristoyl glycine) is attached at Gly2. Topologically, residues Gly2–Pro29 are cytoplasmic. A helical transmembrane segment spans residues Trp30–Ala50. Topologically, residues Thr51–Lys211 are mitochondrial intermembrane. The chain crosses the membrane as a helical span at residues Glu212–Ile232. At Arg233–Arg237 the chain is on the cytoplasmic side. The chain crosses the membrane as a helical span at residues Val238–Leu258. The Mitochondrial intermembrane segment spans residues Trp259 to Ala287. The helical transmembrane segment at Leu288 to Val308 threads the bilayer. Residues Met309–Ala314 are Cytoplasmic-facing. Residues Leu315 to Phe335 traverse the membrane as a helical segment. The Mitochondrial intermembrane portion of the chain corresponds to Gln336–Pro337. A helical membrane pass occupies residues Phe338–Leu358. At Gly359–Pro379 the chain is on the cytoplasmic side. The chain crosses the membrane as a helical span at residues Leu380–Ala400. Topologically, residues Cys401 to Asp536 are mitochondrial intermembrane. A helical transmembrane segment spans residues Phe537–Leu557. Residues Leu558–Thr565 lie on the Cytoplasmic side of the membrane. A helical transmembrane segment spans residues Val566–Leu586. At Ser587–Arg653 the chain is on the mitochondrial intermembrane side.

This sequence belongs to the CTL (choline transporter-like) family. In terms of tissue distribution, specifically abundant in skeletal muscle (at protein level).

It is found in the cell membrane. The protein localises to the mitochondrion outer membrane. It catalyses the reaction choline(out) + n H(+)(in) = choline(in) + n H(+)(out). The catalysed reaction is ethanolamine(out) + n H(+)(in) = ethanolamine(in) + n H(+)(out). In terms of biological role, choline/H+ antiporter. Also acts as a high-affinity ethanolamine/H+ antiporter, regulating the supply of extracellular ethanolamine (Etn) for the CDP-Etn pathway, redistribute intracellular Etn and balance the CDP-Cho and CDP-Etn arms of the Kennedy pathway. Involved in membrane synthesis and myelin production. The chain is Choline transporter-like protein 1 (Slc44a1) from Mus musculus (Mouse).